The primary structure comprises 270 residues: Gap junction beta-3 protein (270 aa).

The Cytoplasmic portion of the chain corresponds to 1–20 (MDWKKLQDLLSGVNQYSTAF). The chain crosses the membrane as a helical span at residues 21–40 (GRIWLSVVFVFRVLVYVVAA). Residues 41–75 (ERVWGDEQKDFDCNTRQPGCTNVCYDNFFPISNIR) lie on the Extracellular side of the membrane. The helical transmembrane segment at 76-98 (LWALQLIFVTCPSMLVILHVAYR) threads the bilayer. Topologically, residues 99 to 126 (EERERKHRQKHGEQCAKLYSHPGKKHGG) are cytoplasmic. Residues 127-149 (LWWTYLFSLIFKLIIELVFLYVL) form a helical membrane-spanning segment. The Extracellular segment spans residues 150-188 (HTLWHGFTMPRLVQCASIVPCPNTVDCYIARPTEKKVFT). The chain crosses the membrane as a helical span at residues 189 to 211 (YFMVGASAVCIILTICEICYLIF). Residues 212–270 (HRIMRGISKGKSTKSISSPKSSSRASTCRCHHKLLESGDPEADPASEKLQASAPSLTPI) lie on the Cytoplasmic side of the membrane. The tract at residues 246-270 (LESGDPEADPASEKLQASAPSLTPI) is disordered.

It belongs to the connexin family. Beta-type (group I) subfamily. As to quaternary structure, a connexon is composed of a hexamer of connexins. Interacts with CNST.

Its subcellular location is the cell membrane. The protein resides in the cell junction. The protein localises to the gap junction. One gap junction consists of a cluster of closely packed pairs of transmembrane channels, the connexons, through which materials of low MW diffuse from one cell to a neighboring cell. This Mus musculus (Mouse) protein is Gap junction beta-3 protein (Gjb3).